A 197-amino-acid polypeptide reads, in one-letter code: MSTLLEQLIEAFRVLPGVGQKSAQRMAYHVLEREREGGRRLAAALGSAVEKVGHCVQCRDFTESEICTICASSSRDRQQLCVVESPADRLAIEHATGYRGLYFILQGRLSPLDGIGPRELGLDRLSERLAAGEVTEMIIATNATVEGEATAHYLAQLARQHAVRPSRLAQGMPLGGELEYVDRGTLSHAFGTRSEVL.

The C4-type zinc-finger motif lies at 55 to 70 (CVQCRDFTESEICTIC). The region spanning 78–173 (QQLCVVESPA…RPSRLAQGMP (96 aa)) is the Toprim domain.

This sequence belongs to the RecR family.

Functionally, may play a role in DNA repair. It seems to be involved in an RecBC-independent recombinational process of DNA repair. It may act with RecF and RecO. In Xanthomonas axonopodis pv. citri (strain 306), this protein is Recombination protein RecR.